Here is a 416-residue protein sequence, read N- to C-terminus: Homogentisate 1,2-dioxygenase (416 aa).

The Proton acceptor role is filled by histidine 275. Positions 318 and 324 each coordinate Fe cation. Positions 333 and 354 each coordinate homogentisate. Position 354 (histidine 354) interacts with Fe cation.

It belongs to the homogentisate dioxygenase family. In terms of assembly, hexamer; dimer of trimers. Fe cation is required as a cofactor.

It carries out the reaction homogentisate + O2 = 4-maleylacetoacetate + H(+). It participates in amino-acid degradation; L-phenylalanine degradation; acetoacetate and fumarate from L-phenylalanine: step 4/6. In terms of biological role, involved in the catabolism of homogentisate (2,5-dihydroxyphenylacetate or 2,5-OH-PhAc), a central intermediate in the degradation of phenylalanine and tyrosine. Catalyzes the oxidative ring cleavage of the aromatic ring of homogentisate to yield maleylacetoacetate. The chain is Homogentisate 1,2-dioxygenase from Legionella pneumophila subsp. pneumophila (strain Philadelphia 1 / ATCC 33152 / DSM 7513).